We begin with the raw amino-acid sequence, 376 residues long: GTPase Obg (376 aa).

An Obg domain is found at Met-1–Ile-158. Residues Ala-159–Lys-359 form the OBG-type G domain. GTP is bound by residues Gly-165–Ser-172, Phe-190–Thr-194, Asp-212–Gly-215, Thr-280–Asp-283, and Ser-340–Ala-342. The Mg(2+) site is built by Ser-172 and Thr-192.

Belongs to the TRAFAC class OBG-HflX-like GTPase superfamily. OBG GTPase family. Monomer. The cofactor is Mg(2+).

It localises to the cytoplasm. In terms of biological role, an essential GTPase which binds GTP, GDP and possibly (p)ppGpp with moderate affinity, with high nucleotide exchange rates and a fairly low GTP hydrolysis rate. Plays a role in control of the cell cycle, stress response, ribosome biogenesis and in those bacteria that undergo differentiation, in morphogenesis control. This chain is GTPase Obg, found in Campylobacter curvus (strain 525.92).